The following is a 187-amino-acid chain: Prepilin peptidase-dependent protein B (187 aa).

Positions 1 to 7 (MPVKEQG) are cleaved as a propeptide — leader sequence. The residue at position 8 (Phe8) is an N-methylphenylalanine. A helical transmembrane segment spans residues 8–28 (FSLLEVLIAMAISSVLLLGAA).

Its subcellular location is the membrane. Its function is as follows. Not yet known. In Escherichia coli (strain K12), this protein is Prepilin peptidase-dependent protein B (ppdB).